A 1410-amino-acid chain; its full sequence is Condensin-1 complex subunit CAP-D2 (1410 aa).

Over residues 469-480 (LEPTEHASKEST) the composition is skewed to basic and acidic residues. Disordered stretches follow at residues 469–492 (LEPT…DGEI), 504–525 (HQDS…EKDV), 860–879 (KTKK…NLEA), and 1208–1410 (KEQE…GSRS). A compositionally biased stretch (polar residues) spans 869-879 (ESQNTEENLEA). Over residues 1208–1226 (KEQEETARNAEVHREKTKT) the composition is skewed to basic and acidic residues. Acidic residues-rich tracts occupy residues 1240-1284 (PVEE…EEPD) and 1306-1319 (IETE…DSEP). Polar residues predominate over residues 1323–1339 (QCGTTNPRSLNRKTSGD). Residues 1342–1365 (IETESEEEQSDSEEEPSDSEEEPD) show a composition bias toward acidic residues. Residues 1368–1379 (QCGTTNPRSLNQ) are compositionally biased toward polar residues.

Belongs to the CND1 (condensin subunit 1) family. In terms of assembly, component of the condensin complex. As to expression, present in buds.

It localises to the chromosome. Its subcellular location is the nucleus. In terms of biological role, essential protein. Regulatory subunit of the condensin complex, a complex required for conversion of interphase chromatin into mitotic-like condense chromosomes. The condensin complex probably introduces positive supercoils into relaxed DNA in the presence of type I topoisomerases and converts nicked DNA into positive knotted forms in the presence of type II topoisomerases. Required for fertility, growth and euchromatin organization, but not for sister chromatid cohesion. Necessary to maintain normal structural integrity of the meiotic chromosomes during the two nuclear divisions of gametogenesis, especially to maintain compaction of the centromeric repeats and 45S rDNA. Also seems to be involved in crossover formation during meiotic prophase I. Prevents centromeric and pericentromeric heterochromatin repeats association. Contributes to the induction of stress-responsive genes in response to stress treatment. The polypeptide is Condensin-1 complex subunit CAP-D2 (Arabidopsis thaliana (Mouse-ear cress)).